The chain runs to 152 residues: Interleukin-3 (152 aa).

The N-terminal stretch at 1–19 (MSCLPVLLLLQLLVSPGLQ) is a signal peptide. Asn-34 and Asn-89 each carry an N-linked (GlcNAc...) asparagine glycan. A disulfide bridge links Cys-35 with Cys-103.

This sequence belongs to the IL-3 family. In terms of assembly, monomer. As to expression, activated T-cells, mast cells, natural killer cells.

The protein localises to the secreted. Granulocyte/macrophage colony-stimulating factors are cytokines that act in hematopoiesis by controlling the production, differentiation, and function of 2 related white cell populations of the blood, the granulocytes and the monocytes-macrophages. Its function is as follows. This CSF induces granulocytes, macrophages, mast cells, stem cells, erythroid cells, eosinophils and megakaryocytes. This chain is Interleukin-3 (IL3), found in Hylobates lar (Lar gibbon).